The following is a 139-amino-acid chain: S-adenosyl-L-methionine-binding protein AF_0241 (139 aa).

One can recognise a TsaA-like domain in the interval 3-133; that stretch reads LKPIGVVKSP…YSPEIDCVNQ (131 aa). S-adenosyl-L-methionine contacts are provided by residues Q16, 20–22, 58–59, R82, L92, and 113–116; these read PRQ, DK, and LDGS.

Belongs to the tRNA methyltransferase O family. Homodimer.

The sequence is that of S-adenosyl-L-methionine-binding protein AF_0241 from Archaeoglobus fulgidus (strain ATCC 49558 / DSM 4304 / JCM 9628 / NBRC 100126 / VC-16).